Here is a 363-residue protein sequence, read N- to C-terminus: 5-formaminoimidazole-4-carboxamide-1-(beta)-D-ribofuranosyl 5'-monophosphate synthetase (363 aa).

The 5-amino-1-(5-phospho-beta-D-ribosyl)imidazole-4-carboxamide site is built by His-29 and Ser-96. The ATP-grasp domain occupies 118-354 (RDILRWEAER…ISREIKNAIE (237 aa)). ATP-binding positions include 148–210 (PEDI…TNFC) and Glu-232. Residue Asn-260 participates in 5-amino-1-(5-phospho-beta-D-ribosyl)imidazole-4-carboxamide binding. Mg(2+) contacts are provided by Gln-299 and Glu-312.

It belongs to the phosphohexose mutase family. The cofactor is Mg(2+). Mn(2+) is required as a cofactor.

The catalysed reaction is 5-amino-1-(5-phospho-beta-D-ribosyl)imidazole-4-carboxamide + formate + ATP = 5-formamido-1-(5-phospho-D-ribosyl)imidazole-4-carboxamide + ADP + phosphate. Its pathway is purine metabolism; IMP biosynthesis via de novo pathway; 5-formamido-1-(5-phospho-D-ribosyl)imidazole-4-carboxamide from 5-amino-1-(5-phospho-D-ribosyl)imidazole-4-carboxamide (formate route): step 1/1. In terms of biological role, catalyzes the ATP- and formate-dependent formylation of 5-aminoimidazole-4-carboxamide-1-beta-d-ribofuranosyl 5'-monophosphate (AICAR) to 5-formaminoimidazole-4-carboxamide-1-beta-d-ribofuranosyl 5'-monophosphate (FAICAR) in the absence of folates. The sequence is that of 5-formaminoimidazole-4-carboxamide-1-(beta)-D-ribofuranosyl 5'-monophosphate synthetase from Methanosphaera stadtmanae (strain ATCC 43021 / DSM 3091 / JCM 11832 / MCB-3).